A 364-amino-acid polypeptide reads, in one-letter code: S-adenosylmethionine:tRNA ribosyltransferase-isomerase (364 aa).

Residues 344–364 (ASDKMQETSGRGERPRFDHEI) are disordered.

Belongs to the QueA family. Monomer.

It is found in the cytoplasm. The catalysed reaction is 7-aminomethyl-7-carbaguanosine(34) in tRNA + S-adenosyl-L-methionine = epoxyqueuosine(34) in tRNA + adenine + L-methionine + 2 H(+). Its pathway is tRNA modification; tRNA-queuosine biosynthesis. Functionally, transfers and isomerizes the ribose moiety from AdoMet to the 7-aminomethyl group of 7-deazaguanine (preQ1-tRNA) to give epoxyqueuosine (oQ-tRNA). In Thioalkalivibrio sulfidiphilus (strain HL-EbGR7), this protein is S-adenosylmethionine:tRNA ribosyltransferase-isomerase.